We begin with the raw amino-acid sequence, 819 residues long: Leucine--tRNA ligase (819 aa).

The 'HIGH' region motif lies at 40 to 51 (PYPSGAGLHVGH). The short motif at 600–604 (KMSKS) is the 'KMSKS' region element. Residue K603 coordinates ATP.

The protein belongs to the class-I aminoacyl-tRNA synthetase family.

The protein resides in the cytoplasm. The enzyme catalyses tRNA(Leu) + L-leucine + ATP = L-leucyl-tRNA(Leu) + AMP + diphosphate. This is Leucine--tRNA ligase from Chlamydia trachomatis serovar A (strain ATCC VR-571B / DSM 19440 / HAR-13).